The primary structure comprises 479 residues: Ubiquinone biosynthesis monooxygenase COQ6, mitochondrial (479 aa).

Residues methionine 1–leucine 17 constitute a mitochondrion transit peptide.

Belongs to the UbiH/COQ6 family. In terms of assembly, component of a multi-subunit COQ enzyme complex, composed of at least COQ3, COQ4, COQ5, COQ6, COQ7 and COQ9. FAD is required as a cofactor.

The protein localises to the mitochondrion inner membrane. The catalysed reaction is 4-hydroxy-3-(all-trans-hexaprenyl)benzoate + 2 reduced [2Fe-2S]-[ferredoxin] + O2 + 2 H(+) = 3,4-dihydroxy-5-(all-trans-hexaprenyl)benzoate + 2 oxidized [2Fe-2S]-[ferredoxin] + H2O. The enzyme catalyses 2-methoxy-6-(all-trans-hexaprenyl)phenol + 2 reduced [2Fe-2S]-[ferredoxin] + O2 + 2 H(+) = 2-methoxy-6-(all-trans-hexaprenyl)benzene-1,4-diol + 2 oxidized [2Fe-2S]-[ferredoxin] + H2O. It catalyses the reaction 4-amino-3-(all-trans-hexaprenyl)benzoate + 2 reduced [2Fe-2S]-[ferredoxin] + O2 + 2 H(+) = 4-amino-5-hydroxy-3-(all-trans-hexaprenyl)benzoate + 2 oxidized [2Fe-2S]-[ferredoxin] + H2O. It carries out the reaction 4-amino-5-hydroxy-3-(all-trans-hexaprenyl)benzoate + 4 reduced [2Fe-2S]-[ferredoxin] + O2 + 5 H(+) = 3,4-dihydroxy-5-(all-trans-hexaprenyl)benzoate + 4 oxidized [2Fe-2S]-[ferredoxin] + NH4(+) + H2O. The protein operates within cofactor biosynthesis; ubiquinone biosynthesis. In terms of biological role, FAD-dependent monooxygenase required for two non-consecutive steps during ubiquinone biosynthesis. Required for the C5-ring hydroxylation during ubiquinone biosynthesis by catalyzing the hydroxylation of 4-hydroxy-3-(all-trans-hexaprenyl)benzoic acid to 3,4-dihydroxy-5-(all-trans-hexaprenyl)benzoic acid. Also acts downstream of COQ4, for the C1-hydroxylation during ubiquinone biosynthesis by catalyzing the hydroxylation of 2-methoxy-6-(all-trans-hexaprenyl)phenol to 2-methoxy-6-(all-trans-hexaprenyl)benzene-1,4-diol. The electrons required for the hydroxylation reaction are funneled indirectly from NADPH via ferredoxin (YAH1) and ferredoxin reductase (ARH1) to COQ6. Can also convert 3-hexaprenyl-4-aminobenzoic acid (HAB), a COQ2-prenylated pABA, to DHHB in a two step process. HAB is first hydroxylated at C5 to yield 3-hexaprenyl-4-amino-5-hydroxybenzoic acid (HHAB) which is further deaminated at C4 by COQ6 to produce DHHB. This is Ubiquinone biosynthesis monooxygenase COQ6, mitochondrial from Saccharomyces cerevisiae (strain ATCC 204508 / S288c) (Baker's yeast).